A 201-amino-acid chain; its full sequence is Probable DNA replication complex GINS protein PSF1 (201 aa).

Belongs to the GINS1/PSF1 family. Component of the GINS complex which is a heterotetramer of gins1, gins2, gins3 and gins4.

Its subcellular location is the nucleus. In terms of biological role, the GINS complex plays an essential role in the initiation of DNA replication. The sequence is that of Probable DNA replication complex GINS protein PSF1 from Caenorhabditis briggsae.